A 607-amino-acid polypeptide reads, in one-letter code: Kelch repeat and BTB domain-containing protein 3 (607 aa).

Positions 48-115 constitute a BTB domain; that stretch reads YDFKIIMKEE…AYTGKTRITD (68 aa). The BACK domain maps to 150 to 250; the sequence is CLHLLSLSDS…QLSEDTLQDY (101 aa). Kelch repeat units follow at residues 291-337, 339-390, 400-450, 452-502, and 548-595; these read KYIF…SSYG, KIFL…TPRT, RLFV…ACQN, IYVL…KAVP, and KIYI…VIQF.

The protein is Kelch repeat and BTB domain-containing protein 3 of Mus musculus (Mouse).